Reading from the N-terminus, the 458-residue chain is Exodeoxyribonuclease 7 large subunit (458 aa).

Belongs to the XseA family. In terms of assembly, heterooligomer composed of large and small subunits.

Its subcellular location is the cytoplasm. It carries out the reaction Exonucleolytic cleavage in either 5'- to 3'- or 3'- to 5'-direction to yield nucleoside 5'-phosphates.. In terms of biological role, bidirectionally degrades single-stranded DNA into large acid-insoluble oligonucleotides, which are then degraded further into small acid-soluble oligonucleotides. The chain is Exodeoxyribonuclease 7 large subunit from Geobacter sp. (strain M21).